A 274-amino-acid chain; its full sequence is Urease accessory protein UreD (274 aa).

The protein belongs to the UreD family. As to quaternary structure, ureD, UreF and UreG form a complex that acts as a GTP-hydrolysis-dependent molecular chaperone, activating the urease apoprotein by helping to assemble the nickel containing metallocenter of UreC. The UreE protein probably delivers the nickel.

The protein resides in the cytoplasm. Required for maturation of urease via the functional incorporation of the urease nickel metallocenter. This is Urease accessory protein UreD from Thermosynechococcus vestitus (strain NIES-2133 / IAM M-273 / BP-1).